We begin with the raw amino-acid sequence, 546 residues long: Chaperonin GroEL 4 (546 aa).

ATP-binding positions include 30–33, lysine 51, 87–91, glycine 415, and aspartate 496; these read TLGP and DGTTT.

The protein belongs to the chaperonin (HSP60) family. As to quaternary structure, forms a cylinder of 14 subunits composed of two heptameric rings stacked back-to-back. Interacts with the co-chaperonin GroES.

It is found in the cytoplasm. It catalyses the reaction ATP + H2O + a folded polypeptide = ADP + phosphate + an unfolded polypeptide.. Together with its co-chaperonin GroES, plays an essential role in assisting protein folding. The GroEL-GroES system forms a nano-cage that allows encapsulation of the non-native substrate proteins and provides a physical environment optimized to promote and accelerate protein folding. This chain is Chaperonin GroEL 4, found in Bradyrhizobium sp. (strain BTAi1 / ATCC BAA-1182).